We begin with the raw amino-acid sequence, 188 residues long: Elongation factor P (188 aa).

This sequence belongs to the elongation factor P family.

The protein localises to the cytoplasm. It functions in the pathway protein biosynthesis; polypeptide chain elongation. Its function is as follows. Involved in peptide bond synthesis. Stimulates efficient translation and peptide-bond synthesis on native or reconstituted 70S ribosomes in vitro. Probably functions indirectly by altering the affinity of the ribosome for aminoacyl-tRNA, thus increasing their reactivity as acceptors for peptidyl transferase. This Bradyrhizobium sp. (strain BTAi1 / ATCC BAA-1182) protein is Elongation factor P.